The sequence spans 349 residues: MLDNSFYTAEVQGPYETASIGRLELEEGGVIEDCWLAYATAGTLNEDKSNAILIPTWYSGTHQTWFQQYIGTDHALDPSKYFIISINQIGNGLSVSPANTADDSISMSKFPNVRIGDDVVAQDRLLRQEFGITELFAVVGGSMGAQQTYEWIVRFPDQVHRAAPIAGTAKNTPHDFIFTQTLNETVEADPGFNGGEYSSHEEVADGLRRQSHLWAAMGFSTEFWKQEAWRRLGLESKESVLADFLDPLFMSMDPNTLLNNAWKWQHGDVSRHTGGDLAAALGRVKAKTFVMPISEDMFFPVRDCAAEQALIPGSELRVIEDIAGHLGLFNVSENYIPQIDKNLKELFES.

An AB hydrolase-1 domain is found at 60-329 (GTHQTWFQQY…EDIAGHLGLF (270 aa)). The active-site Nucleophile is the S142. Catalysis depends on residues D296 and H325.

It belongs to the AB hydrolase superfamily. Acetyl esterase family. In terms of assembly, homodimer.

Esterase that catalyzes the hydrolysis of 4-nitrophenyl acetate in vitro. The sequence is that of Probable esterase Cgl0839 from Corynebacterium glutamicum (strain ATCC 13032 / DSM 20300 / JCM 1318 / BCRC 11384 / CCUG 27702 / LMG 3730 / NBRC 12168 / NCIMB 10025 / NRRL B-2784 / 534).